The following is a 1550-amino-acid chain: Adhesion G protein-coupled receptor L3 (1550 aa).

Positions 1 to 19 are cleaved as a signal peptide; it reads MCPPQLFILMMLLAPVVHG. The Extracellular segment spans residues 20-948; that stretch reads GKHNERHPAL…VHDLLLDVIT (929 aa). The segment at 34-80 is disordered; the sequence is RHAEHSPGGPLPPRHLLQQPAAERSTAHRGQGPRGTARGVRGPGAPG. The SUEL-type lectin domain maps to 103–192; it reads SCESYPIELR…KYLEVQYECV (90 aa). 5 cysteine pairs are disulfide-bonded: Cys104–Cys134, Cys113–Cys191, Cys146–Cys178, Cys159–Cys165, and Cys203–Cys385. Asn161 is a glycosylation site (N-linked (GlcNAc...) asparagine). In terms of domain architecture, Olfactomedin-like spans 202–461; the sequence is LCPGLLKGVY…VVKYSLDFGP (260 aa). Residues 317 to 347 form an interaction with FLRT3 region; that stretch reads YHDTSPYRWGGKSDIDLAVDENGLWVIYATE. Residues Asp332, Asn380, Ala381, and Val435 each coordinate Ca(2+). The segment at 518–538 is disordered; sequence NLGRSTTPSLPGRRNRSTSTP. N-linked (GlcNAc...) asparagine glycosylation is found at Asn532, Asn616, Asn839, Asn884, and Asn910. The region spanning 755–934 is the GAIN-B domain; sequence DIVRENTDNI…AVLMAHVEVK (180 aa). Cystine bridges form between Cys885–Cys916 and Cys904–Cys918. The GPS stretch occupies residues 885-934; it reads CSFWSYSKRTMTGYWSTQGCRLLTTNKTHTTCSCNHLTNFAVLMAHVEVK. Positions 922 to 938 are stachel; sequence TNFAVLMAHVEVKHSDA. The helical transmembrane segment at 949–969 threads the bilayer; it reads WVGILLSLVCLLICIFTFCFF. Over 970-977 the chain is Cytoplasmic; it reads RGLQSDRN. A helical transmembrane segment spans residues 978-998; that stretch reads TIHKNLCISLFVAELLFLIGI. N-linked (GlcNAc...) asparagine glycosylation occurs at Asn999. At 999–1006 the chain is on the extracellular side; it reads NRTDQPIA. Residues 1007–1027 form a helical membrane-spanning segment; that stretch reads CAVFAALLHFFFLAAFTWMFL. Topologically, residues 1028 to 1048 are cytoplasmic; that stretch reads EGVQLYIMLVEVFESEHSRRK. The chain crosses the membrane as a helical span at residues 1049 to 1069; that stretch reads YFYLVGYGMPALIVAVSAAVD. Over 1070–1087 the chain is Extracellular; sequence YRSYGTDKVCWLRLDTYF. A helical transmembrane segment spans residues 1088–1108; the sequence is IWSFIGPATLIIMLNVIFLGI. Residues 1109 to 1141 are Cytoplasmic-facing; sequence ALYKMFHHTAILKPESGCLDNINYEDNRPFIKS. Residues 1142–1162 form a helical membrane-spanning segment; the sequence is WVIGAIALLCLLGLTWAFGLM. The Extracellular segment spans residues 1163–1168; that stretch reads YINEST. Residue Asn1165 is glycosylated (N-linked (GlcNAc...) asparagine). The chain crosses the membrane as a helical span at residues 1169-1189; it reads VIMAYLFTIFNSLQGMFIFIF. Residues 1190–1550 lie on the Cytoplasmic side of the membrane; it reads HCVLQKKVRK…KGPAHLVTSL (361 aa). The tract at residues 1213–1236 is disordered; the sequence is KSTESSIGSGKTSGSRTPGRYSTG. Residue Ser1253 is modified to Phosphoserine. Disordered stretches follow at residues 1410–1435 and 1528–1550; these read LLPP…PQDH and PPNK…VTSL. A Phosphoserine modification is found at Ser1535. A PDZ-binding motif is present at residues 1545-1550; the sequence is HLVTSL.

Belongs to the G-protein coupled receptor 2 family. LN-TM7 subfamily. In terms of assembly, heterodimer of 2 chains generated by proteolytic processing; the large extracellular N-terminal fragment and the membrane-bound C-terminal fragment predominantly remain associated and non-covalently linked. Interacts (via olfactomedin-like domain) with FLRT1 (via extracellular domain). Interacts (via olfactomedin-like domain) with FLRT2 (via extracellular domain). Interacts (via olfactomedin-like domain) with FLRT3 (via extracellular domain); the interaction is direct. Interacts (via extracellular domain) with TENM1. Interacts (via extracellular domain) with TENM2. Interacts (via extracellular domain) with TENM3. Identified in a complex with FLRT3 and UNC5B; does not interact with UNC5B by itself. Identified in a complex with FLRT3 and UNC5D; does not interact with UNC5D by itself. As to quaternary structure, interacts (via PDZ-binding motif) with SHANK3. Interacts (via PDZ-binding motif) with DLG4. Autoproteolytically processed at the GPS region of the GAIN-B domain; this cleavage modulates receptor activity. Predominantly expressed in brain, followed by heart, placenta, pancreas, kidney and testis.

Its subcellular location is the cell membrane. The protein localises to the postsynaptic cell membrane. The protein resides in the cell projection. It localises to the axon. It is found in the cell junction. Forms a heterodimer of 2 chains generated by proteolytic processing that remain associated through non-covalent interactions mediated by the GAIN-B domain. In the inactivated receptor, the Stachel sequence (also named stalk) is embedded in the GAIN-B domain, where it adopts a beta-strand conformation. On activation, the Stachel moves into the 7 transmembrane region and adopts a twisted hook-shaped configuration that forms contacts within the receptor, leading to coupling of a G-alpha protein, which activates signaling. The cleaved GAIN-B and N-terminal domains can then dissociate from the rest of the receptor. Its function is as follows. Orphan adhesion G-protein coupled receptor (aGPCR), which mediates synapse specificity. Ligand binding causes a conformation change that triggers signaling via guanine nucleotide-binding proteins (G proteins) and modulates the activity of downstream effectors. ADGRL3 is coupled with different classes of G alpha proteins, such as G(12)/G(13), G(s), G(i) or G(q), depending on the context. Coupling to G(12)/G(13) G proteins, which mediates the activation Rho small GTPases is the most efficient. Following G-protein coupled receptor activation, associates with cell adhesion molecules that are expressed at the surface of adjacent cells to direct synapse specificity. Specifically mediates the establishment of Schaffer-collateral synapses formed by CA3-region axons on CA1-region pyramidal neurons in the hippocampus. Localizes to postsynaptic spines in excitatory synapses in the S.oriens and S.radiatum and interacts with presynaptic cell adhesion molecules FLRT3 and TENM2, promoting synapse formation. Plays a role in the development of glutamatergic synapses in the cortex. Important in determining the connectivity rates between the principal neurons in the cortex. Orphan adhesion G-protein coupled receptor (aGPCR), which mediates synapse specificity. Ligand binding causes a conformation change that triggers signaling via guanine nucleotide-binding proteins (G proteins) and modulates the activity of downstream effectors, such as adenylate cyclase. Isoform 1 is specifically coupled to G(s) G proteins and mediates activation of adenylate cyclase activity. Following G-protein coupled receptor activation, undergoes liquid-liquid phase transition, associates with (1) cell adhesion molecules that are expressed at the surface of adjacent cells, as well as (2) PDZ-containing proteins, such as SHANK3 and DLG4, in the cytoplasm to direct synapse formation. In Rattus norvegicus (Rat), this protein is Adhesion G protein-coupled receptor L3.